The following is a 703-amino-acid chain: Meiotic coiled-coil protein 2 (703 aa).

2 stretches are compositionally biased toward polar residues: residues 1–19 and 245–258; these read MQSI…SISE and TNVR…STPL. Disordered stretches follow at residues 1–29, 245–265, and 284–309; these read MQSI…SELN, TNVR…DVDL, and ASTN…RSSS. A PUM-HD domain is found at 331–686; it reads NPSVIPESTS…KVAYLVEKWN (356 aa). 8 Pumilio repeats span residues 361 to 396, 397 to 432, 433 to 468, 469 to 504, 509 to 544, 545 to 580, 581 to 616, and 625 to 660; these read NVII…NIVD, SIIS…QMGS, AMLG…AMMD, ELFL…NVMN, ALRG…ECIE, EIIF…RVID, ALLN…LYLK, and RTRQ…LVIT.

In Schizosaccharomyces pombe (strain 972 / ATCC 24843) (Fission yeast), this protein is Meiotic coiled-coil protein 2 (mcp2).